The sequence spans 250 residues: Bis(5'-nucleosyl)-tetraphosphatase PrpE [asymmetrical] (250 aa).

This sequence belongs to the PrpE family. Requires Ni(2+) as cofactor.

The enzyme catalyses P(1),P(4)-bis(5'-guanosyl) tetraphosphate + H2O = GMP + GTP + 2 H(+). In terms of biological role, asymmetrically hydrolyzes Ap4p to yield AMP and ATP. The sequence is that of Bis(5'-nucleosyl)-tetraphosphatase PrpE [asymmetrical] from Oceanobacillus iheyensis (strain DSM 14371 / CIP 107618 / JCM 11309 / KCTC 3954 / HTE831).